The primary structure comprises 389 residues: Putative DNA processing protein DprA (389 aa).

This sequence belongs to the DprA/Smf family.

Its function is as follows. May help load RecA onto ssDNA. In Mycobacterium tuberculosis (strain CDC 1551 / Oshkosh), this protein is Putative DNA processing protein DprA.